The following is a 613-amino-acid chain: Pentatricopeptide repeat-containing protein At2g02750 (613 aa).

PPR repeat units follow at residues 30–64, 65–99, 101–126, 128–162, 163–193, 194–228, 230–264, 265–295, 297–331, 332–366, 367–401, 402–432, 435–469, 470–500, and 506–539; these read NKFT…GFFV, DVFT…GIAS, NAAV…ARVS, SGMN…GFEM, EVYV…VPHK, SVVT…SSEE, NDVT…EFQF, ETMV…LKDT, NLIS…GLKP, DSAT…VMVP, SLKC…AAER, DIFV…FEPK, DPVF…KVEP, SLAT…MQEE, and STEH…PSSS. Residues 540–613 form a type E motif; degenerate region; sequence VYSSLLGSCR…VKLPGLSLSG (74 aa).

It belongs to the PPR family. PCMP-E subfamily.

This Arabidopsis thaliana (Mouse-ear cress) protein is Pentatricopeptide repeat-containing protein At2g02750 (PCMP-E22).